A 951-amino-acid polypeptide reads, in one-letter code: Glycine dehydrogenase (decarboxylating) (951 aa).

Residue Lys709 is modified to N6-(pyridoxal phosphate)lysine.

It belongs to the GcvP family. As to quaternary structure, the glycine cleavage system is composed of four proteins: P, T, L and H. Pyridoxal 5'-phosphate is required as a cofactor.

The catalysed reaction is N(6)-[(R)-lipoyl]-L-lysyl-[glycine-cleavage complex H protein] + glycine + H(+) = N(6)-[(R)-S(8)-aminomethyldihydrolipoyl]-L-lysyl-[glycine-cleavage complex H protein] + CO2. Functionally, the glycine cleavage system catalyzes the degradation of glycine. The P protein binds the alpha-amino group of glycine through its pyridoxal phosphate cofactor; CO(2) is released and the remaining methylamine moiety is then transferred to the lipoamide cofactor of the H protein. The sequence is that of Glycine dehydrogenase (decarboxylating) from Gluconobacter oxydans (strain 621H) (Gluconobacter suboxydans).